Reading from the N-terminus, the 162-residue chain is Peptide deformylase-like (162 aa).

The protein belongs to the polypeptide deformylase family.

The polypeptide is Peptide deformylase-like (Staphylococcus epidermidis (strain ATCC 35984 / DSM 28319 / BCRC 17069 / CCUG 31568 / BM 3577 / RP62A)).